The primary structure comprises 127 residues: Glycine cleavage system H protein (127 aa).

The Lipoyl-binding domain occupies 24 to 105 (TALAGITDFA…YGEGWLVKIK (82 aa)). An N6-lipoyllysine modification is found at Lys-65.

It belongs to the GcvH family. In terms of assembly, the glycine cleavage system is composed of four proteins: P, T, L and H. Requires (R)-lipoate as cofactor.

Its function is as follows. The glycine cleavage system catalyzes the degradation of glycine. The H protein shuttles the methylamine group of glycine from the P protein to the T protein. The chain is Glycine cleavage system H protein from Chlorobium phaeobacteroides (strain DSM 266 / SMG 266 / 2430).